A 532-amino-acid chain; its full sequence is MMMVRRGLLAWISRVVVLLVLLCCAISVLYMLACTPKGDEEQLALPRANSPTGKEGYQAVLQEWEEQHRNYVSSLKRQIAQLKEELQERSEQLRNGQYQASDAAGLGLDRSPPEKTQADLLAFLHSQVDKAEVNAGVKLATEYAAVPFDSFTLQKVYQLETGLTRHPEEKPVRKDKRDELVEAIESALETLNSPAENSPNHRPYTASDFIEGIYRTERDKGTLYELTFKGDHKHEFKRLILFRPFGPIMKVKNEKLNMANTLINVIVPLAKRVDKFRQFMQNFREMCIEQDGRVHLTVVYFGKEEINEVKGILENTSKAANFRNFTFIQLNGEFSRGKGLDVGARFWKGSNVLLFFCDVDIYFTSEFLNTCRLNTQPGKKVFYPVLFSQYNPGIIYGHHDAVPPLEQQLVIKKETGFWRDFGFGMTCQYRSDFINIGGFDLDIKGWGGEDVHLYRKYLHSNLIVVRTPVRGLFHLWHEKRCMDELTPEQYKMCMQSKAMNEASHGQLGMLVFRHEIEAHLRKQKQKTSSKKT.

The Cytoplasmic portion of the chain corresponds to 1–14 (MMMVRRGLLAWISR). A helical; Signal-anchor for type II membrane protein transmembrane segment spans residues 15–35 (VVVLLVLLCCAISVLYMLACT). At 36 to 532 (PKGDEEQLAL…QKQKTSSKKT (497 aa)) the chain is on the lumenal side. The stretch at 57-100 (YQAVLQEWEEQHRNYVSSLKRQIAQLKEELQERSEQLRNGQYQA) forms a coiled coil. N-linked (GlcNAc...) asparagine glycosylation is found at asparagine 315 and asparagine 324. Residues aspartate 360 and histidine 477 each coordinate a divalent metal cation.

This sequence belongs to the chondroitin N-acetylgalactosaminyltransferase family. N-glycosylated. Ubiquitous, with the highest levels in placenta, thyroid, bladder, prostate and adrenal gland. Detected at low levels in the other tissues examined.

The protein resides in the golgi apparatus. It is found in the golgi stack membrane. The catalysed reaction is 3-O-(beta-D-GlcA-(1-&gt;3)-beta-D-Gal-(1-&gt;3)-beta-D-Gal-(1-&gt;4)-beta-D-Xyl)-L-seryl-[protein] + UDP-N-acetyl-alpha-D-galactosamine = 3-O-(beta-D-GalNAc-(1-&gt;4)-beta-D-GlcA-(1-&gt;3)-beta-D-Gal-(1-&gt;3)-beta-D-Gal-(1-&gt;4)-beta-D-Xyl)-L-seryl-[protein] + UDP + H(+). Its function is as follows. Transfers 1,4-N-acetylgalactosamine (GalNAc) from UDP-GalNAc to the non-reducing end of glucuronic acid (GlcUA). Required for addition of the first GalNAc to the core tetrasaccharide linker and for elongation of chondroitin chains. Important role in chondroitin chain biosynthesis in cartilage formation and subsequent endochondral ossification. Moreover, is involved in the metabolism of aggrecan. This Homo sapiens (Human) protein is Chondroitin sulfate N-acetylgalactosaminyltransferase 1.